The following is a 773-amino-acid chain: Linolenate 9R-lipoxygenase (773 aa).

In terms of domain architecture, Lipoxygenase spans Tyr176 to Ile773. Residues His515, His520, and Ile773 each coordinate Fe cation.

It belongs to the lipoxygenase family.

The catalysed reaction is (9Z,12Z,15Z)-octadecatrienoate + O2 = (9R,10E,12Z,15Z)-9-hydroperoxyoctadeca-10,12,15-trienoate. It participates in lipid metabolism; oxylipin biosynthesis. Its function is as follows. Catalyzes the conversion of alpha-linoleate to (9R,10E,12Z,15Z)-9-hydroperoxyoctadeca-10,12,15-trienoate in oxylipin biosynthesis. Also converts alpha-linoleate to (9R,10E,12Z)-9-hydroperoxyoctadeca-10,12-dienoate. The sequence is that of Linolenate 9R-lipoxygenase from Nostoc sp. (strain PCC 7120 / SAG 25.82 / UTEX 2576).